We begin with the raw amino-acid sequence, 269 residues long: GTP cyclohydrolase FolE2 (269 aa).

The protein belongs to the GTP cyclohydrolase IV family.

It catalyses the reaction GTP + H2O = 7,8-dihydroneopterin 3'-triphosphate + formate + H(+). It participates in cofactor biosynthesis; 7,8-dihydroneopterin triphosphate biosynthesis; 7,8-dihydroneopterin triphosphate from GTP: step 1/1. Functionally, converts GTP to 7,8-dihydroneopterin triphosphate. This is GTP cyclohydrolase FolE2 from Azoarcus sp. (strain BH72).